A 299-amino-acid chain; its full sequence is Plasmodesmata-located protein 5 (299 aa).

A signal peptide spans 1-25; the sequence is MIKTKTTSLLCFLLTAVILMNPSSS. Topologically, residues 26 to 264 are extracellular; that stretch reads SPTDNYIYAV…NKDDNGVGKT (239 aa). Gnk2-homologous domains are found at residues 29–135 and 137–237; these read DNYI…NKSF and GVQD…VGGS. Cystine bridges form between C36–C113, C89–C98, C101–C126, C148–C215, C191–C200, and C203–C228. Residues 265–285 traverse the membrane as a helical segment; that stretch reads LAIIIGIVTLIILLVVFLAFV. Residues 265 to 285 are necessary and sufficient for plasmodesmal targeting; it reads LAIIIGIVTLIILLVVFLAFV. At 286-299 the chain is on the cytoplasmic side; sequence GKCCRKLQDEKWCK.

It belongs to the cysteine-rich repeat secretory protein family. Plasmodesmata-located proteins (PDLD) subfamily. Monomer. Interacts with PDLP1. In terms of assembly, (Microbial infection) Interacts with Grapevine fanleaf virus (GFLV) 2B-MP. Highly expressed in inflorescence nodes and rosette senescent leaves. Mostly expressed in cell wall junctions between leaf epidermal and mesophyl cells, and to a lesser extent at the cross walls between epidermal or cortex cells within the hypocotyl (at protein level). Low vascular expression in seedling and mature leaf, but high expression in senescing leaves (at protein level).

The protein resides in the cell membrane. It localises to the cell junction. It is found in the plasmodesma. Functionally, modulates cell-to-cell trafficking. Has a positive role in innate immunity. Required for systemic acquired resistance (SAR) which is mediated by the signaling molecules azelaic acid (AzA), glycerol-3-phosphate (G3P), and salicylic acid (SA). Negative regulator of plasmodesmata permeability triggered by SA during immune responses, through regulation of callose deposition. Delays the trafficking of Tobacco Mosaic Virus (TMV) movement protein (MP). Required for symplastic signal transport. This chain is Plasmodesmata-located protein 5, found in Arabidopsis thaliana (Mouse-ear cress).